A 157-amino-acid chain; its full sequence is Ribonuclease H (157 aa).

The region spanning 1–146 (MPDLFAYTDG…ADELARAGMA (146 aa)) is the RNase H type-1 domain. The Mg(2+) site is built by Asp-9, Glu-52, Asp-74, and Asp-138.

It belongs to the RNase H family. As to quaternary structure, monomer. Requires Mg(2+) as cofactor.

It is found in the cytoplasm. The catalysed reaction is Endonucleolytic cleavage to 5'-phosphomonoester.. Endonuclease that specifically degrades the RNA of RNA-DNA hybrids. This Ruegeria sp. (strain TM1040) (Silicibacter sp.) protein is Ribonuclease H.